Here is a 232-residue protein sequence, read N- to C-terminus: Two-component response regulator ORR4 (232 aa).

In terms of domain architecture, Response regulatory spans 11–147 (HVLAVDDSLI…DMKKLKSHLL (137 aa)). Asp80 carries the post-translational modification 4-aspartylphosphate. 2 disordered regions span residues 153–174 (LPMA…AASA) and 202–232 (AAAM…AVET). Over residues 209-232 (VISSPDQRTKPRLSSTSSGLAVET) the composition is skewed to polar residues.

This sequence belongs to the ARR family. Type-A subfamily. Post-translationally, two-component system major event consists of a His-to-Asp phosphorelay between a sensor histidine kinase (HK) and a response regulator (RR). In plants, the His-to-Asp phosphorelay involves an additional intermediate named Histidine-containing phosphotransfer protein (HPt). This multistep phosphorelay consists of a His-Asp-His-Asp sequential transfer of a phosphate group between first a His and an Asp of the HK protein, followed by the transfer to a conserved His of the HPt protein and finally the transfer to an Asp in the receiver domain of the RR protein. As to expression, expressed in mature leaves and flowers, and at low levels in roots and shoots.

Its function is as follows. Functions as a response regulator involved in His-to-Asp phosphorelay signal transduction system. Phosphorylation of the Asp residue in the receiver domain activates the ability of the protein to promote the transcription of target genes. Type-A response regulators seem to act as negative regulators of the cytokinin signaling. The protein is Two-component response regulator ORR4 of Oryza sativa subsp. indica (Rice).